We begin with the raw amino-acid sequence, 148 residues long: Antitoxin Xre (148 aa).

The protein belongs to the MbcA/ParS/Xre antitoxin family. As to quaternary structure, homodimer. Forms a complex with cognate toxin Rse.

Its function is as follows. Antitoxin component of a type II toxin-antitoxin (TA) system. Neutralizes the activity of cognate toxin Res. This chain is Antitoxin Xre, found in Yersinia enterocolitica serotype O:8 / biotype 1B (strain NCTC 13174 / 8081).